The chain runs to 142 residues: Large ribosomal subunit protein uL11 (142 aa).

This sequence belongs to the universal ribosomal protein uL11 family. In terms of assembly, part of the ribosomal stalk of the 50S ribosomal subunit. Interacts with L10 and the large rRNA to form the base of the stalk. L10 forms an elongated spine to which L12 dimers bind in a sequential fashion forming a multimeric L10(L12)X complex. In terms of processing, one or more lysine residues are methylated.

Its function is as follows. Forms part of the ribosomal stalk which helps the ribosome interact with GTP-bound translation factors. In Hamiltonella defensa subsp. Acyrthosiphon pisum (strain 5AT), this protein is Large ribosomal subunit protein uL11.